The chain runs to 349 residues: UDP-N-acetylenolpyruvoylglucosamine reductase (349 aa).

The region spanning 24–197 (FGIDATARFA…VAVTFRLPKR (174 aa)) is the FAD-binding PCMH-type domain. The active site involves R173. The active-site Proton donor is the S249. E345 is a catalytic residue.

The protein belongs to the MurB family. It depends on FAD as a cofactor.

The protein localises to the cytoplasm. It carries out the reaction UDP-N-acetyl-alpha-D-muramate + NADP(+) = UDP-N-acetyl-3-O-(1-carboxyvinyl)-alpha-D-glucosamine + NADPH + H(+). It participates in cell wall biogenesis; peptidoglycan biosynthesis. Its function is as follows. Cell wall formation. The chain is UDP-N-acetylenolpyruvoylglucosamine reductase from Burkholderia ambifaria (strain ATCC BAA-244 / DSM 16087 / CCUG 44356 / LMG 19182 / AMMD) (Burkholderia cepacia (strain AMMD)).